The chain runs to 105 residues: MALWTRLVPLLALLALWAPAPAHAFVNQHLCGSHLVEALYLVCGERGFFYTPKARREVEGPQVGALELAGGPGAGGLEGPPQKRGIVEQCCAGVCSLYQLENYCN.

The N-terminal stretch at 1-24 (MALWTRLVPLLALLALWAPAPAHA) is a signal peptide. Cystine bridges form between Cys31-Cys91, Cys43-Cys104, and Cys90-Cys95. A propeptide spans 57 to 82 (EVEGPQVGALELAGGPGAGGLEGPPQ) (c peptide).

This sequence belongs to the insulin family. In terms of assembly, heterodimer of a B chain and an A chain linked by two disulfide bonds.

The protein resides in the secreted. Its function is as follows. Insulin decreases blood glucose concentration. It increases cell permeability to monosaccharides, amino acids and fatty acids. It accelerates glycolysis, the pentose phosphate cycle, and glycogen synthesis in liver. The chain is Insulin (INS) from Ovis aries (Sheep).